Here is a 374-residue protein sequence, read N- to C-terminus: Alcohol dehydrogenase class-3 (374 aa).

Position 2 is an N-acetylalanine (alanine 2). Positions 45, 67, 97, 100, 103, 111, and 174 each coordinate Zn(2+). Residue lysine 233 is modified to N6-succinyllysine. The residue at position 247 (serine 247) is a Phosphoserine. N6-succinyllysine is present on lysine 315. The residue at position 324 (serine 324) is a Phosphoserine.

It belongs to the zinc-containing alcohol dehydrogenase family. Class-III subfamily. As to quaternary structure, homodimer. The cofactor is Zn(2+).

It is found in the cytoplasm. It catalyses the reaction a primary alcohol + NAD(+) = an aldehyde + NADH + H(+). The catalysed reaction is a secondary alcohol + NAD(+) = a ketone + NADH + H(+). It carries out the reaction S-(hydroxymethyl)glutathione + NADP(+) = S-formylglutathione + NADPH + H(+). The enzyme catalyses S-(hydroxymethyl)glutathione + NAD(+) = S-formylglutathione + NADH + H(+). It catalyses the reaction 20-oxo-(5Z,8Z,11Z,14Z)-eicosatetraenoate + NAD(+) + H2O = (5Z,8Z,11Z,14Z)-eicosatetraenedioate + NADH + 2 H(+). The catalysed reaction is 20-hydroxy-(5Z,8Z,11Z,14Z)-eicosatetraenoate + NAD(+) = 20-oxo-(5Z,8Z,11Z,14Z)-eicosatetraenoate + NADH + H(+). It carries out the reaction S-nitrosoglutathione + NADH + H(+) = S-(hydroxysulfenamide)glutathione + NAD(+). In terms of biological role, catalyzes the oxidation of long-chain primary alcohols and the oxidation of S-(hydroxymethyl) glutathione. Also oxidizes long chain omega-hydroxy fatty acids, such as 20-HETE, producing both the intermediate aldehyde, 20-oxoarachidonate and the end product, a dicarboxylic acid, (5Z,8Z,11Z,14Z)-eicosatetraenedioate. Class-III ADH is remarkably ineffective in oxidizing ethanol. Required for clearance of cellular formaldehyde, a cytotoxic and carcinogenic metabolite that induces DNA damage. Also acts as a S-nitroso-glutathione reductase by catalyzing the NADH-dependent reduction of S-nitrosoglutathione, thereby regulating protein S-nitrosylation. This chain is Alcohol dehydrogenase class-3, found in Bos taurus (Bovine).